The sequence spans 753 residues: 5-methyltetrahydropteroyltriglutamate--homocysteine methyltransferase (753 aa).

5-methyltetrahydropteroyltri-L-glutamate contacts are provided by residues 17–20 and lysine 117; that span reads RELK. L-homocysteine contacts are provided by residues 431–433 and glutamate 484; that span reads IGS. Residues 431–433 and glutamate 484 each bind L-methionine; that span reads IGS. Residues 515 to 516 and tryptophan 561 each bind 5-methyltetrahydropteroyltri-L-glutamate; that span reads RC. Aspartate 599 serves as a coordination point for L-homocysteine. Aspartate 599 serves as a coordination point for L-methionine. Glutamate 605 provides a ligand contact to 5-methyltetrahydropteroyltri-L-glutamate. Zn(2+) is bound by residues histidine 641, cysteine 643, and glutamate 665. Histidine 694 serves as the catalytic Proton donor. Cysteine 726 is a Zn(2+) binding site.

This sequence belongs to the vitamin-B12 independent methionine synthase family. Zn(2+) serves as cofactor.

It carries out the reaction 5-methyltetrahydropteroyltri-L-glutamate + L-homocysteine = tetrahydropteroyltri-L-glutamate + L-methionine. The protein operates within amino-acid biosynthesis; L-methionine biosynthesis via de novo pathway; L-methionine from L-homocysteine (MetE route): step 1/1. Its function is as follows. Catalyzes the transfer of a methyl group from 5-methyltetrahydrofolate to homocysteine resulting in methionine formation. This chain is 5-methyltetrahydropteroyltriglutamate--homocysteine methyltransferase, found in Escherichia coli (strain ATCC 8739 / DSM 1576 / NBRC 3972 / NCIMB 8545 / WDCM 00012 / Crooks).